Here is a 289-residue protein sequence, read N- to C-terminus: ATP synthase subunit a (289 aa).

Transmembrane regions (helical) follow at residues 43-63 (AFHV…LFIF), 104-124 (IAPL…IDLV), 160-180 (ISVF…GGFL), 193-213 (IVVQ…TLIA), 232-252 (IFIL…ALGV), and 259-279 (AVFH…LTIV).

It belongs to the ATPase A chain family. In terms of assembly, F-type ATPases have 2 components, CF(1) - the catalytic core - and CF(0) - the membrane proton channel. CF(1) has five subunits: alpha(3), beta(3), gamma(1), delta(1), epsilon(1). CF(0) has three main subunits: a(1), b(2) and c(9-12). The alpha and beta chains form an alternating ring which encloses part of the gamma chain. CF(1) is attached to CF(0) by a central stalk formed by the gamma and epsilon chains, while a peripheral stalk is formed by the delta and b chains.

The protein resides in the cell inner membrane. Key component of the proton channel; it plays a direct role in the translocation of protons across the membrane. This chain is ATP synthase subunit a, found in Pseudomonas paraeruginosa (strain DSM 24068 / PA7) (Pseudomonas aeruginosa (strain PA7)).